The sequence spans 120 residues: UPF0145 protein Bcenmc03_5217 (120 aa).

Belongs to the UPF0145 family.

The polypeptide is UPF0145 protein Bcenmc03_5217 (Burkholderia orbicola (strain MC0-3)).